A 629-amino-acid chain; its full sequence is tRNA uridine 5-carboxymethylaminomethyl modification enzyme MnmG (629 aa).

14–19 lines the FAD pocket; that stretch reads GAGHAG. 274–288 contributes to the NAD(+) binding site; it reads GPRYCPSIEDKVVRF.

This sequence belongs to the MnmG family. As to quaternary structure, homodimer. Heterotetramer of two MnmE and two MnmG subunits. FAD serves as cofactor.

It localises to the cytoplasm. In terms of biological role, NAD-binding protein involved in the addition of a carboxymethylaminomethyl (cmnm) group at the wobble position (U34) of certain tRNAs, forming tRNA-cmnm(5)s(2)U34. This chain is tRNA uridine 5-carboxymethylaminomethyl modification enzyme MnmG, found in Xylella fastidiosa (strain 9a5c).